The chain runs to 178 residues: Ribosome maturation factor RimM (178 aa).

The region spanning 104–177 (SDEYYFYEVI…KIVVKLPEWL (74 aa)) is the PRC barrel domain.

Belongs to the RimM family. As to quaternary structure, binds ribosomal protein uS19.

The protein resides in the cytoplasm. Functionally, an accessory protein needed during the final step in the assembly of 30S ribosomal subunit, possibly for assembly of the head region. Essential for efficient processing of 16S rRNA. May be needed both before and after RbfA during the maturation of 16S rRNA. It has affinity for free ribosomal 30S subunits but not for 70S ribosomes. The protein is Ribosome maturation factor RimM of Thermosipho melanesiensis (strain DSM 12029 / CIP 104789 / BI429).